The sequence spans 402 residues: MGVELGSNSEVGALRVVILHRPGAELRRLTPRNTDQLLFDGLPWVSRAQDEHDEFAELLASRGAEVLLLSDLLTEALHHSGAARMQGIAAAVDAPRLGLPLAQELSAYLRSLDPGRLAHVLTAGMTFNELPSDTRTDVSLVLRMHHGGDFVIEPLPNLVFTRDSSIWIGPRVVIPSLALRARVREASLTDLIYAHHPRFTGVRRAYESRTAPVEGGDVLLLAPGVVAVGVGERTTPAGAEALARSLFDDDLAHTVLAVPIAQQRAQMHLDTVCTMVDTDTMVMYANVVDTLEAFTIQRTPDGVTIGDAAPFAEAAAKAMGIDKLRVIHTGMDPVVAEREQWDDGNNTLALAPGVVVAYERNVQTNARLQDAGIEVLTIAGSELGTGRGGPRCMSCPAARDPL.

The active-site Amidino-cysteine intermediate is Cys392.

It belongs to the arginine deiminase family.

The protein localises to the cytoplasm. The enzyme catalyses L-arginine + H2O = L-citrulline + NH4(+). It functions in the pathway amino-acid degradation; L-arginine degradation via ADI pathway; carbamoyl phosphate from L-arginine: step 1/2. This chain is Arginine deiminase (arcA), found in Mycobacterium bovis (strain ATCC BAA-935 / AF2122/97).